The chain runs to 132 residues: Small ribosomal subunit protein uS8 (132 aa).

This sequence belongs to the universal ribosomal protein uS8 family. As to quaternary structure, part of the 30S ribosomal subunit. Contacts proteins S5 and S12.

One of the primary rRNA binding proteins, it binds directly to 16S rRNA central domain where it helps coordinate assembly of the platform of the 30S subunit. The chain is Small ribosomal subunit protein uS8 from Ehrlichia ruminantium (strain Welgevonden).